Consider the following 166-residue polypeptide: SsrA-binding protein (166 aa).

It belongs to the SmpB family.

It localises to the cytoplasm. Required for rescue of stalled ribosomes mediated by trans-translation. Binds to transfer-messenger RNA (tmRNA), required for stable association of tmRNA with ribosomes. tmRNA and SmpB together mimic tRNA shape, replacing the anticodon stem-loop with SmpB. tmRNA is encoded by the ssrA gene; the 2 termini fold to resemble tRNA(Ala) and it encodes a 'tag peptide', a short internal open reading frame. During trans-translation Ala-aminoacylated tmRNA acts like a tRNA, entering the A-site of stalled ribosomes, displacing the stalled mRNA. The ribosome then switches to translate the ORF on the tmRNA; the nascent peptide is terminated with the 'tag peptide' encoded by the tmRNA and targeted for degradation. The ribosome is freed to recommence translation, which seems to be the essential function of trans-translation. In Parasynechococcus marenigrum (strain WH8102), this protein is SsrA-binding protein.